The chain runs to 314 residues: Ecto-ADP-ribosyltransferase 4 (314 aa).

A signal peptide spans 1 to 46 (MGPLINRCKKILLPTTVPPATMRIWLLGGPLPFLLLLSGLQRPTEG). Disulfide bonds link C69-C280 and C182-C231. The region spanning 91 to 276 (KNYFRMWQKA…LQLRSTGNLS (186 aa)) is the TR mART core domain. The N-linked (GlcNAc...) asparagine glycan is linked to N114. Y126 is a binding site for NAD(+). An N-linked (GlcNAc...) asparagine glycan is attached at N178. Q206 contributes to the NAD(+) binding site. N-linked (GlcNAc...) asparagine glycosylation occurs at N222. S240 is an NAD(+) binding site. N257 and N274 each carry an N-linked (GlcNAc...) asparagine glycan. A285 carries the GPI-anchor amidated alanine lipid modification. The propeptide at 286-314 (SSKKCIPDPIAIASLSFLTSVIIFSKSRV) is removed in mature form.

Belongs to the Arg-specific ADP-ribosyltransferase family.

The protein localises to the cell membrane. It carries out the reaction L-arginyl-[protein] + NAD(+) = N(omega)-(ADP-D-ribosyl)-L-arginyl-[protein] + nicotinamide + H(+). This chain is Ecto-ADP-ribosyltransferase 4 (ART4), found in Pan troglodytes (Chimpanzee).